The sequence spans 320 residues: Ferrochelatase (320 aa).

Fe cation contacts are provided by H194 and E275.

This sequence belongs to the ferrochelatase family. As to quaternary structure, monomer.

Its subcellular location is the cytoplasm. It carries out the reaction heme b + 2 H(+) = protoporphyrin IX + Fe(2+). The protein operates within porphyrin-containing compound metabolism; protoheme biosynthesis; protoheme from protoporphyrin-IX: step 1/1. Its function is as follows. Catalyzes the ferrous insertion into protoporphyrin IX. The sequence is that of Ferrochelatase from Shigella flexneri serotype 5b (strain 8401).